The primary structure comprises 498 residues: TORTIFOLIA1-like protein 5 (498 aa).

HEAT repeat units follow at residues 56–93 (ETFS…SHGD), 97–134 (PHLS…NITG), 136–173 (PFSI…AADE), 177–214 (EQLQ…AVGG), and 219–257 (KAVL…VEEE). The segment at 296–423 (EGDSTEVSES…SSSQAKSNAE (128 aa)) is disordered. Residues 300–322 (TEVSESSSSSKSASSGLSATSGK) are compositionally biased toward low complexity. Basic and acidic residues predominate over residues 343–366 (NDVEPLDRGDTPKDVEQEAVVSKE). Residues 390-400 (NGSNKSQVVQS) show a composition bias toward polar residues. A Phosphoserine modification is found at Ser-426.

The sequence is that of TORTIFOLIA1-like protein 5 from Arabidopsis thaliana (Mouse-ear cress).